The following is a 340-amino-acid chain: tRNA-dihydrouridine(20/20a) synthase (340 aa).

Residues 22–24 (PMM) and Gln-75 contribute to the FMN site. The Proton donor role is filled by Cys-105. Residues Lys-144, His-177, 217-219 (NGG), and 239-240 (GR) each bind FMN.

This sequence belongs to the Dus family. DusA subfamily. Requires FMN as cofactor.

The enzyme catalyses 5,6-dihydrouridine(20) in tRNA + NADP(+) = uridine(20) in tRNA + NADPH + H(+). It catalyses the reaction 5,6-dihydrouridine(20) in tRNA + NAD(+) = uridine(20) in tRNA + NADH + H(+). It carries out the reaction 5,6-dihydrouridine(20a) in tRNA + NADP(+) = uridine(20a) in tRNA + NADPH + H(+). The catalysed reaction is 5,6-dihydrouridine(20a) in tRNA + NAD(+) = uridine(20a) in tRNA + NADH + H(+). Functionally, catalyzes the synthesis of 5,6-dihydrouridine (D), a modified base found in the D-loop of most tRNAs, via the reduction of the C5-C6 double bond in target uridines. Specifically modifies U20 and U20a in tRNAs. In Xylella fastidiosa (strain 9a5c), this protein is tRNA-dihydrouridine(20/20a) synthase.